The sequence spans 427 residues: Septin-8-A (427 aa).

Residues Q39–E305 form the Septin-type G domain. Residues G49–S56 are G1 motif. GTP is bound by residues G49–S56, G104, K185–E193, G239, and R254. The segment at D101 to G104 is G3 motif. The segment at A184 to D187 is G4 motif. The stretch at L320–Q409 forms a coiled coil. A compositionally biased stretch (basic and acidic residues) spans Q376–L389. A disordered region spans residues Q376–N427. Over residues L406–P418 the composition is skewed to polar residues.

The protein belongs to the TRAFAC class TrmE-Era-EngA-EngB-Septin-like GTPase superfamily. Septin GTPase family.

This Xenopus laevis (African clawed frog) protein is Septin-8-A (sept8-a).